The following is a 520-amino-acid chain: Probable alginate O-acetylase AlgI (520 aa).

Helical transmembrane passes span 7–24 (VFLF…YLSG), 39–61 (FYAW…NYWI), 78–100 (WLIL…NFGV), 115–137 (FVLT…ISYI), 150–172 (NLID…VLRF), 239–261 (LYFD…GFRF), 311–333 (LFLT…IWGA), 353–375 (VLNP…IFRA), 402–424 (ANLT…FFGL), and 483–505 (WLSQ…ASVL). The active site involves H322.

The protein belongs to the membrane-bound acyltransferase family.

It is found in the cell inner membrane. It functions in the pathway glycan biosynthesis; alginate biosynthesis. In terms of biological role, together with AlgJ and AlgF, forms an inner membrane complex which probably interacts with the alginate polymerization-transport complex and adds acetyl groups at the O-2 and O-3 positions of mannuronate residues. Acetylation of alginate is important for the architecture of biofilms and increases resistance to opsonic killing in the host. The polypeptide is Probable alginate O-acetylase AlgI (algI) (Pseudomonas aeruginosa (strain ATCC 15692 / DSM 22644 / CIP 104116 / JCM 14847 / LMG 12228 / 1C / PRS 101 / PAO1)).